The primary structure comprises 181 residues: Bifunctional protein PyrR (181 aa).

Positions 101–113 (VILVDDVLFTGRT) match the PRPP-binding motif.

It belongs to the purine/pyrimidine phosphoribosyltransferase family. PyrR subfamily.

The catalysed reaction is UMP + diphosphate = 5-phospho-alpha-D-ribose 1-diphosphate + uracil. Functionally, regulates the transcription of the pyrimidine nucleotide (pyr) operon in response to exogenous pyrimidines. In terms of biological role, also displays a weak uracil phosphoribosyltransferase activity which is not physiologically significant. The sequence is that of Bifunctional protein PyrR from Desulfosudis oleivorans (strain DSM 6200 / JCM 39069 / Hxd3) (Desulfococcus oleovorans).